The sequence spans 123 residues: ATP synthase epsilon chain (123 aa).

This sequence belongs to the ATPase epsilon chain family. As to quaternary structure, F-type ATPases have 2 components, CF(1) - the catalytic core - and CF(0) - the membrane proton channel. CF(1) has five subunits: alpha(3), beta(3), gamma(1), delta(1), epsilon(1). CF(0) has three main subunits: a, b and c.

The protein localises to the cell inner membrane. Its function is as follows. Produces ATP from ADP in the presence of a proton gradient across the membrane. This is ATP synthase epsilon chain (atpC) from Helicobacter pylori (strain ATCC 700392 / 26695) (Campylobacter pylori).